A 404-amino-acid polypeptide reads, in one-letter code: Sorting nexin-32 (404 aa).

A compositionally biased stretch (basic and acidic residues) spans 1 to 10 (MEEQHQEAGN). Residues 1–29 (MEEQHQEAGNESKPSSTSVDLQGDSPLQV) form a disordered region. The span at 11–20 (ESKPSSTSVD) shows a compositional bias: polar residues. In terms of domain architecture, PX spans 21 to 168 (LQGDSPLQVE…SVFLEYSQDL (148 aa)). Residues 255–336 (TQEVNQLKRS…KARTRNREVR (82 aa)) adopt a coiled-coil conformation.

It belongs to the sorting nexin family.

Its function is as follows. May be involved in several stages of intracellular trafficking. The sequence is that of Sorting nexin-32 (Snx32) from Mus musculus (Mouse).